Consider the following 298-residue polypeptide: Ribosomal protein L11 methyltransferase (298 aa).

Residues Thr152, Gly176, Asp198, and Asn236 each contribute to the S-adenosyl-L-methionine site.

It belongs to the methyltransferase superfamily. PrmA family.

The protein localises to the cytoplasm. It catalyses the reaction L-lysyl-[protein] + 3 S-adenosyl-L-methionine = N(6),N(6),N(6)-trimethyl-L-lysyl-[protein] + 3 S-adenosyl-L-homocysteine + 3 H(+). Its function is as follows. Methylates ribosomal protein L11. In Polaromonas sp. (strain JS666 / ATCC BAA-500), this protein is Ribosomal protein L11 methyltransferase.